Here is a 287-residue protein sequence, read N- to C-terminus: Putative syntaxin-4 (287 aa).

The Cytoplasmic portion of the chain corresponds to 1–262 (MHQISGINAA…NRKWKIVTCI (262 aa)). Residues 65–97 (KCRKLNDHVDKFIAQARGIRRRLADASEELVQY) adopt a coiled-coil conformation. One can recognise a t-SNARE coiled-coil homology domain in the interval 184–246 (FDDMKNRATD…EQAQQNVRQA (63 aa)). A helical; Anchor for type IV membrane protein membrane pass occupies residues 263–283 (ALIVLLLVVVYLLSHFLGAII). Over 284 to 287 (PGWK) the chain is Extracellular.

Belongs to the syntaxin family.

It is found in the membrane. Functionally, potentially involved in docking of synaptic vesicles at presynaptic active zones. This chain is Putative syntaxin-4 (syx-4), found in Caenorhabditis elegans.